A 371-amino-acid chain; its full sequence is 3-isopropylmalate dehydrogenase (371 aa).

Residue 77-90 (GPKWDDNPPHLRPE) coordinates NAD(+). Substrate is bound by residues arginine 97, arginine 107, arginine 135, and aspartate 224. 3 residues coordinate Mg(2+): aspartate 224, aspartate 248, and aspartate 252. 282–294 (GSAPDIAGMNKAN) is an NAD(+) binding site.

This sequence belongs to the isocitrate and isopropylmalate dehydrogenases family. LeuB type 1 subfamily. Homodimer. Mg(2+) is required as a cofactor. The cofactor is Mn(2+).

Its subcellular location is the cytoplasm. The catalysed reaction is (2R,3S)-3-isopropylmalate + NAD(+) = 4-methyl-2-oxopentanoate + CO2 + NADH. It participates in amino-acid biosynthesis; L-leucine biosynthesis; L-leucine from 3-methyl-2-oxobutanoate: step 3/4. Functionally, catalyzes the oxidation of 3-carboxy-2-hydroxy-4-methylpentanoate (3-isopropylmalate) to 3-carboxy-4-methyl-2-oxopentanoate. The product decarboxylates to 4-methyl-2 oxopentanoate. This chain is 3-isopropylmalate dehydrogenase, found in Geobacillus kaustophilus (strain HTA426).